Here is a 351-residue protein sequence, read N- to C-terminus: MTVALGRVQERGWFDVLDDWLKRDRFVFIGWSGLLLFPCAFLSIGGWFTGTTFVTSWYTHGLASSYLEGCNFLTAAVSTPADSMGHSLLLLWGPEARGDFTRWCQLGGMWNFVTLHGAFGLIGFMLRQFEIARLVNVRPYNAVAFSGPIAVFVSVFLMYPLGQSSWFFAPSWGVASIFRFLLFVQGFHNLTLNPFHMMGVAGILGGALLCAIHGATVENTLFEDTKDANTFSGFSPTQSEETYSMVTANRFWSQIFGIAFSNKRWLHFFMLFVPVTGLWASAIGLVGIALNMRAYDFVSQEIRAAEDPEFETFYTKNILLNEGLRAWMAPQDQIHENFVFPEEVLPRGNAL.

The chain crosses the membrane as a helical span at residues 39-59 (CAFLSIGGWFTGTTFVTSWYT). Residue His116 coordinates chlorophyll a. Residues 123–139 (GFMLRQFEIARLVNVRP) traverse the membrane as a helical segment. Pheophytin a-binding residues include Gln128 and Asn141. The helical transmembrane segment at 151–164 (VFVSVFLMYPLGQS) threads the bilayer. His196 provides a ligand contact to chlorophyll a. A helical transmembrane segment spans residues 206 to 226 (GALLCAIHGATVENTLFEDTK). A plastoquinone is bound by residues His213 and Phe260. His213 contributes to the Fe cation binding site. Fe cation is bound at residue His267. A helical transmembrane segment spans residues 277–293 (GLWASAIGLVGIALNMR).

It belongs to the reaction center PufL/M/PsbA/D family. In terms of assembly, PSII is composed of 1 copy each of membrane proteins PsbA, PsbB, PsbC, PsbD, PsbE, PsbF, PsbH, PsbI, PsbJ, PsbK, PsbL, PsbM, PsbT, PsbX, PsbY, PsbZ, Psb30/Ycf12, peripheral proteins PsbO, CyanoQ (PsbQ), PsbU, PsbV and a large number of cofactors. It forms dimeric complexes. The D1/D2 heterodimer binds P680, chlorophylls that are the primary electron donor of PSII, and subsequent electron acceptors. It shares a non-heme iron and each subunit binds pheophytin, quinone, additional chlorophylls, carotenoids and lipids. There is also a Cl(-1) ion associated with D1 and D2, which is required for oxygen evolution. The PSII complex binds additional chlorophylls, carotenoids and specific lipids. serves as cofactor.

The protein resides in the cellular thylakoid membrane. It carries out the reaction 2 a plastoquinone + 4 hnu + 2 H2O = 2 a plastoquinol + O2. Its function is as follows. Photosystem II (PSII) is a light-driven water:plastoquinone oxidoreductase that uses light energy to abstract electrons from H(2)O, generating O(2) and a proton gradient subsequently used for ATP formation. It consists of a core antenna complex that captures photons, and an electron transfer chain that converts photonic excitation into a charge separation. The D1/D2 (PsbA/PsbD) reaction center heterodimer binds P680, the primary electron donor of PSII as well as several subsequent electron acceptors. D2 is needed for assembly of a stable PSII complex. The protein is Photosystem II D2 protein 2 of Acaryochloris marina (strain MBIC 11017).